A 103-amino-acid polypeptide reads, in one-letter code: Small ribosomal subunit protein uS10 (103 aa).

This sequence belongs to the universal ribosomal protein uS10 family. In terms of assembly, part of the 30S ribosomal subunit.

Involved in the binding of tRNA to the ribosomes. The sequence is that of Small ribosomal subunit protein uS10 from Paraburkholderia xenovorans (strain LB400).